The primary structure comprises 126 residues: Urease subunit beta (126 aa).

Belongs to the urease beta subunit family. Heterotrimer of UreA (gamma), UreB (beta) and UreC (alpha) subunits. Three heterotrimers associate to form the active enzyme.

Its subcellular location is the cytoplasm. The catalysed reaction is urea + 2 H2O + H(+) = hydrogencarbonate + 2 NH4(+). It functions in the pathway nitrogen metabolism; urea degradation; CO(2) and NH(3) from urea (urease route): step 1/1. The chain is Urease subunit beta from Frankia casuarinae (strain DSM 45818 / CECT 9043 / HFP020203 / CcI3).